Reading from the N-terminus, the 572-residue chain is Proline--tRNA ligase (572 aa).

The protein belongs to the class-II aminoacyl-tRNA synthetase family. ProS type 1 subfamily. As to quaternary structure, homodimer.

The protein resides in the cytoplasm. It catalyses the reaction tRNA(Pro) + L-proline + ATP = L-prolyl-tRNA(Pro) + AMP + diphosphate. In terms of biological role, catalyzes the attachment of proline to tRNA(Pro) in a two-step reaction: proline is first activated by ATP to form Pro-AMP and then transferred to the acceptor end of tRNA(Pro). As ProRS can inadvertently accommodate and process non-cognate amino acids such as alanine and cysteine, to avoid such errors it has two additional distinct editing activities against alanine. One activity is designated as 'pretransfer' editing and involves the tRNA(Pro)-independent hydrolysis of activated Ala-AMP. The other activity is designated 'posttransfer' editing and involves deacylation of mischarged Ala-tRNA(Pro). The misacylated Cys-tRNA(Pro) is not edited by ProRS. This Erwinia tasmaniensis (strain DSM 17950 / CFBP 7177 / CIP 109463 / NCPPB 4357 / Et1/99) protein is Proline--tRNA ligase.